Reading from the N-terminus, the 159-residue chain is 2-C-methyl-D-erythritol 2,4-cyclodiphosphate synthase (159 aa).

A divalent metal cation is bound by residues aspartate 10 and histidine 12. 4-CDP-2-C-methyl-D-erythritol 2-phosphate-binding positions include 10 to 12 (DVH) and 36 to 37 (HS). Position 44 (histidine 44) interacts with a divalent metal cation. 4-CDP-2-C-methyl-D-erythritol 2-phosphate-binding positions include 58 to 60 (DIG), 134 to 137 (TTSE), phenylalanine 141, and arginine 144.

Belongs to the IspF family. Homotrimer. It depends on a divalent metal cation as a cofactor.

It catalyses the reaction 4-CDP-2-C-methyl-D-erythritol 2-phosphate = 2-C-methyl-D-erythritol 2,4-cyclic diphosphate + CMP. The protein operates within isoprenoid biosynthesis; isopentenyl diphosphate biosynthesis via DXP pathway; isopentenyl diphosphate from 1-deoxy-D-xylulose 5-phosphate: step 4/6. Its function is as follows. Involved in the biosynthesis of isopentenyl diphosphate (IPP) and dimethylallyl diphosphate (DMAPP), two major building blocks of isoprenoid compounds. Catalyzes the conversion of 4-diphosphocytidyl-2-C-methyl-D-erythritol 2-phosphate (CDP-ME2P) to 2-C-methyl-D-erythritol 2,4-cyclodiphosphate (ME-CPP) with a corresponding release of cytidine 5-monophosphate (CMP). The chain is 2-C-methyl-D-erythritol 2,4-cyclodiphosphate synthase from Cereibacter sphaeroides (strain ATCC 17025 / ATH 2.4.3) (Rhodobacter sphaeroides).